A 242-amino-acid polypeptide reads, in one-letter code: Small ribosomal subunit protein uS2 (242 aa).

It belongs to the universal ribosomal protein uS2 family.

The polypeptide is Small ribosomal subunit protein uS2 (Pseudoalteromonas translucida (strain TAC 125)).